The following is a 132-amino-acid chain: Small ribosomal subunit protein uS11 (132 aa).

The protein belongs to the universal ribosomal protein uS11 family. In terms of assembly, part of the 30S ribosomal subunit.

In terms of biological role, located on the platform of the 30S subunit. This chain is Small ribosomal subunit protein uS11, found in Thermoplasma volcanium (strain ATCC 51530 / DSM 4299 / JCM 9571 / NBRC 15438 / GSS1).